The chain runs to 72 residues: MSKEEAIEVEGTVIEPLPNAMFKVKLENDHIVLAHISGKMRKYFIKILPGDKVTVELSPYDLTRGRITYRAK.

Residues 1–72 (MSKEEAIEVE…TRGRITYRAK (72 aa)) enclose the S1-like domain.

The protein belongs to the IF-1 family. In terms of assembly, component of the 30S ribosomal translation pre-initiation complex which assembles on the 30S ribosome in the order IF-2 and IF-3, IF-1 and N-formylmethionyl-tRNA(fMet); mRNA recruitment can occur at any time during PIC assembly.

It is found in the cytoplasm. Its function is as follows. One of the essential components for the initiation of protein synthesis. Stabilizes the binding of IF-2 and IF-3 on the 30S subunit to which N-formylmethionyl-tRNA(fMet) subsequently binds. Helps modulate mRNA selection, yielding the 30S pre-initiation complex (PIC). Upon addition of the 50S ribosomal subunit IF-1, IF-2 and IF-3 are released leaving the mature 70S translation initiation complex. This chain is Translation initiation factor IF-1, found in Geotalea uraniireducens (strain Rf4) (Geobacter uraniireducens).